Reading from the N-terminus, the 231-residue chain is Cytochrome c oxidase assembly factor 7 (231 aa).

5 Sel1-like repeats span residues 34-66 (PDGC…DQNE), 68-104 (SESC…NKGG), 108-145 (IDSC…DGNF), 146-182 (AASC…SLGH), and 183-218 (MWGC…DLHR).

It belongs to the hcp beta-lactamase family.

It localises to the mitochondrion intermembrane space. May be required for assembly of mitochondrial respiratory chain complexes. In Xenopus tropicalis (Western clawed frog), this protein is Cytochrome c oxidase assembly factor 7 (coa7).